Reading from the N-terminus, the 199-residue chain is Chaperone protein TorD (199 aa).

It belongs to the TorD/DmsD family. TorD subfamily.

Its subcellular location is the cytoplasm. Involved in the biogenesis of TorA. Acts on TorA before the insertion of the molybdenum cofactor and, as a result, probably favors a conformation of the apoenzyme that is competent for acquiring the cofactor. The protein is Chaperone protein TorD of Actinobacillus pleuropneumoniae serotype 3 (strain JL03).